A 593-amino-acid chain; its full sequence is Translation initiation factor IF-2 (593 aa).

A tr-type G domain is found at 101–270 (LRPPVVTIMG…LLIAELEDLR (170 aa)). The G1 stretch occupies residues 110–117 (GHVDHGKT). 110–117 (GHVDHGKT) serves as a coordination point for GTP. The tract at residues 135–139 (GITQH) is G2. Positions 156–159 (DTPG) are G3. GTP is bound by residues 156-160 (DTPGH) and 210-213 (NKMD). Residues 210–213 (NKMD) form a G4 region. The tract at residues 246 to 248 (SAR) is G5.

The protein belongs to the TRAFAC class translation factor GTPase superfamily. Classic translation factor GTPase family. IF-2 subfamily.

It localises to the cytoplasm. Functionally, one of the essential components for the initiation of protein synthesis. Protects formylmethionyl-tRNA from spontaneous hydrolysis and promotes its binding to the 30S ribosomal subunits. Also involved in the hydrolysis of GTP during the formation of the 70S ribosomal complex. In Dehalococcoides mccartyi (strain CBDB1), this protein is Translation initiation factor IF-2.